Consider the following 366-residue polypeptide: Inactive protein RESTRICTED TEV MOVEMENT 2 (366 aa).

Residues 14–121 form the sHSP domain; sequence VQYEDFVPKS…LPETSRTEAA (108 aa). The A-1 repeat unit spans residues 129-133; the sequence is LEEKR. The segment at 129–220 is 6 X 5 AA repeats A of L-E-E-[SKR]-[ERK]; the sequence is LEEKRLLEES…LEERRLEERK (92 aa). The stretch at 135 to 139 is one A-2 repeat; that stretch reads LEESR. The A-3 repeat unit spans residues 156 to 160; sequence LEEKE. One copy of the B-1 repeat lies at 163–176; that stretch reads IRKLQEEAKAKEEA. The 3 X 14 AA repeats B of [IMA]-[RK]-K-L-Q-E-E-A-K-A-K-E-[EK]-[LA] stretch occupies residues 163-206; that stretch reads IRKLQEEAKAKEEAEMRKLQEEAKANEEAAAKKLQEEIEAKEKL. One copy of the B-2 repeat lies at 178–191; it reads MRKLQEEAKANEEA. The B-3 repeat unit spans residues 193 to 205; the sequence is AKKLQEEIEAKEK. An A-4 repeat occupies 206 to 210; sequence LEERK. The A-5 repeat unit spans residues 211 to 215; that stretch reads LEERR. The A-6 repeat unit spans residues 216–220; it reads LEERK. The helical transmembrane segment at 322 to 342 threads the bilayer; sequence LMMNVGVAALVIFALGAYVSY. Residues 345-366 form a disordered region; it reads CSSSSSSSSSSPSSSSSSTKPE. Positions 346 to 366 are enriched in low complexity; it reads SSSSSSSSSSPSSSSSSTKPE.

It belongs to the small heat shock protein (HSP20) family.

The protein localises to the cell membrane. Its function is as follows. Seems to not be involved in heat resistance. Unable to mediate restriction of long-distance movement of the pathogenic tobacco etch virus (TEV) without causing a hypersensitive response or inducing systemic acquired resistance. This Arabidopsis thaliana (Mouse-ear cress) protein is Inactive protein RESTRICTED TEV MOVEMENT 2 (RTM2).